A 138-amino-acid polypeptide reads, in one-letter code: 16 kDa phloem protein 2 (138 aa).

The C2 domain occupies 1–108; the sequence is MGMGMMEVHL…LAEGVRKGWS (108 aa). Residues aspartate 20, aspartate 27, aspartate 78, aspartate 80, and aspartate 86 each contribute to the Ca(2+) site.

It depends on Ca(2+) as a cofactor. As to expression, sieve elements of leaves, stems, roots and flowers.

Its function is as follows. Binds to both sense and antisense RNA. Interacts with mesophyll plasmodesmata to mediate its own cell-to-cell transport and potentiate RNA trafficking. This chain is 16 kDa phloem protein 2 (PP16-2), found in Cucurbita maxima (Pumpkin).